A 237-amino-acid polypeptide reads, in one-letter code: Coat protein (237 aa).

The tract at residues 1–24 (MSAPASTTQPIGSTTSTTTKTAGA) is disordered.

It belongs to the potexvirus capsid protein family.

It is found in the virion. Functionally, required for genome encapsidation. Forms ribonucleoprotein complexes along with TGB1 helicase and viral RNA. In Potato virus X (strain UK3) (PVX), this protein is Coat protein.